The sequence spans 299 residues: Aspartate carbamoyltransferase catalytic subunit (299 aa).

Positions 51 and 52 each coordinate carbamoyl phosphate. Position 79 (Lys79) interacts with L-aspartate. 3 residues coordinate carbamoyl phosphate: Arg101, His130, and Gln133. L-aspartate is bound by residues Arg163 and Arg215. Gly256 and Pro257 together coordinate carbamoyl phosphate.

It belongs to the aspartate/ornithine carbamoyltransferase superfamily. ATCase family. As to quaternary structure, heterododecamer (2C3:3R2) of six catalytic PyrB chains organized as two trimers (C3), and six regulatory PyrI chains organized as three dimers (R2).

The catalysed reaction is carbamoyl phosphate + L-aspartate = N-carbamoyl-L-aspartate + phosphate + H(+). Its pathway is pyrimidine metabolism; UMP biosynthesis via de novo pathway; (S)-dihydroorotate from bicarbonate: step 2/3. Functionally, catalyzes the condensation of carbamoyl phosphate and aspartate to form carbamoyl aspartate and inorganic phosphate, the committed step in the de novo pyrimidine nucleotide biosynthesis pathway. This Ehrlichia chaffeensis (strain ATCC CRL-10679 / Arkansas) protein is Aspartate carbamoyltransferase catalytic subunit.